Reading from the N-terminus, the 56-residue chain is LAAVSVDCSEYPKPACTLEHRPLCGSDNKTYGNKCNFCNAVVESNGTLTLSHFGKC.

Residues 6–56 (VDCSEYPKPACTLEHRPLCGSDNKTYGNKCNFCNAVVESNGTLTLSHFGKC) form the Kazal-like domain. 3 disulfide bridges follow: C8–C38, C16–C35, and C24–C56. N45 carries an N-linked (GlcNAc...) asparagine glycan.

Its subcellular location is the secreted. In Pavo cristatus (Indian peafowl), this protein is Ovomucoid.